Here is a 304-residue protein sequence, read N- to C-terminus: Non-specific ribonucleoside hydrolase RihC (304 aa).

Residue His-233 is part of the active site.

Belongs to the IUNH family. RihC subfamily.

Its function is as follows. Hydrolyzes both purine and pyrimidine ribonucleosides with a broad-substrate specificity. In Escherichia coli (strain 55989 / EAEC), this protein is Non-specific ribonucleoside hydrolase RihC.